The primary structure comprises 537 residues: Caspase recruitment domain-containing protein 8 (537 aa).

Positions 1–23 (MEKKECPEKSSSSEEELPRRDSG) are enriched in basic and acidic residues. Disordered regions lie at residues 1-28 (MEKK…SRNI) and 113-133 (GDIP…SGDI). The interval 161 to 296 (FLGPEGNVDV…FYAVLESPSF (136 aa)) is ZU5. Positions 161-446 (FLGPEGNVDV…LQLVAASAPP (286 aa)) constitute an FIIND domain. A UPA region spans residues 297 to 446 (SLMGILLRIA…LQLVAASAPP (150 aa)). The CARD domain maps to 446 to 536 (PPFSGAAFVK…YLVSYLRQQN (91 aa)).

In terms of assembly, interacts with DPP9; leading to inhibit activation of the inflammasome. DPP9 acts via formation of a ternary complex, composed of a DPP9 homodimer, one full-length CARD8 protein, and one cleaved C-terminus of CARD8 (Caspase recruitment domain-containing protein 8, C-terminus). Interacts with DPP8; leading to inhibit activation of the inflammasome, probably via formation of a ternary complex with DPP8. Interacts with NLRP3. Interacts with IKBKG/NEMO. Interacts with DRAL. Binds to caspase-1 (CASP1), CARD16/pseudo-ICE and CARD18/ICEBERG. Interacts with NLRP2 (via NACHT domain). As to quaternary structure, interacts with the C-terminal part of CARD8 (Caspase recruitment domain-containing protein 8, C-terminus) in absence of pathogens and other damage-associated signals. Interacts with the N-terminal part of CARD8 (Caspase recruitment domain-containing protein 8, N-terminus) in absence of pathogens and other damage-associated signals. Homomultimer; forms the CARD8 inflammasome polymeric complex, a filament composed of homopolymers of this form in response to pathogens and other damage-associated signals. The CARD8 inflammasome polymeric complex directly recruits pro-caspase-1 (proCASP1) independently of PYCARD/ASC. Interacts (via CARD domain) with CASP1 (via CARD domain); leading to CASP1 activation. Undergoes autocatalytic processing within the FIIND domain to generate the N-terminal and C-terminal parts, which are associated non-covalently in absence of pathogens and other damage-associated signals. Post-translationally, ubiquitinated by the N-end rule pathway in response to pathogens and other damage-associated signals, leading to its degradation by the proteasome and subsequent release of the cleaved C-terminal part of the protein (Caspase recruitment domain-containing protein 8, C-terminus), which polymerizes and forms the CARD8 inflammasome. In terms of processing, (Microbial infection) Proteolytic cleavage by HIV-1 protease in the disordered region and within the ZU5 region of the FIIND domain promotes ubiquitination of the N-terminal part by the N-end rule pathway and degradation by the proteasome, releasing the cleaved C-terminal part of the protein (Caspase recruitment domain-containing protein 8, C-terminus), which polymerizes and forms the CARD8 inflammasome. Undergoes less autocatalytic processing within the FIIND domain compared to isoform 5. In terms of tissue distribution, high expression in lung, ovary, testis and placenta. Lower expression in heart, kidney and liver. Also expressed in spleen, lymph node and bone marrow.

It is found in the cytoplasm. Its subcellular location is the nucleus. The protein localises to the inflammasome. With respect to regulation, CARD8 inflammasome is activated by HIV-1 protease activity: HIV-1 protease cleaves CARD8, promoting ubiquitination and degradation of the N-terminal part, releasing the cleaved C-terminal part of the protein (Caspase recruitment domain-containing protein 8, C-terminus), which polymerizes and forms the CARD8 inflammasome. CARD8 inflammasome is inhibited by DPP8 and DPP9, which sequester the C-terminal fragment of CARD8 (Caspase recruitment domain-containing protein 8, C-terminus) in a ternary complex, thereby preventing CARD8 oligomerization and activation. CARD8 inflammasome is activated by Val-boroPro (Talabostat, PT-100), an inhibitor of dipeptidyl peptidases DPP8 and DPP9. Val-boroPro relieves inhibition of DPP8 and/or DPP9 by inducing the proteasome-mediated destruction of the N-terminal part of CARD8, releasing its C-terminal part from autoinhibition. Indirectly activated by the pseudodipeptide CQ31. CQ31 directly inactivates the peptidases PEPD and XPNPEP1, leading to an accumulation of dipeptides that weaky inhibit DDP8 and DPP9, relieving DPP8- and/or DPP9-mediated inhibition of CARD8. Its function is as follows. Inflammasome sensor, which mediates inflammasome activation in response to various pathogen-associated signals, leading to subsequent pyroptosis of CD4(+) T-cells and macrophages. Inflammasomes are supramolecular complexes that assemble in the cytosol in response to pathogens and other damage-associated signals and play critical roles in innate immunity and inflammation. Acts as a recognition receptor (PRR): recognizes specific pathogens and other damage-associated signals, such as HIV-1 protease activity or Val-boroPro inhibitor, and mediates CARD8 inflammasome activation. In response to pathogen-associated signals, the N-terminal part of CARD8 is degraded by the proteasome, releasing the cleaved C-terminal part of the protein (Caspase recruitment domain-containing protein 8, C-terminus), which polymerizes to initiate the formation of the inflammasome complex: the CARD8 inflammasome directly recruits pro-caspase-1 (proCASP1) independently of PYCARD/ASC and promotes caspase-1 (CASP1) activation, which subsequently cleaves and activates inflammatory cytokines IL1B and IL18 and gasdermin-D (GSDMD), leading to pyroptosis. Ability to sense HIV-1 protease activity leads to the clearance of latent HIV-1 in patient CD4(+) T-cells after viral reactivation; in contrast, HIV-1 can evade CARD8-sensing when its protease remains inactive in infected cells prior to viral budding. Also acts as a negative regulator of the NLRP3 inflammasome. May also act as an inhibitor of NF-kappa-B activation. Functionally, constitutes the precursor of the CARD8 inflammasome, which mediates autoproteolytic processing within the FIIND domain to generate the N-terminal and C-terminal parts, which are associated non-covalently in absence of pathogens and other damage-associated signals. Regulatory part that prevents formation of the CARD8 inflammasome: in absence of pathogens and other damage-associated signals, interacts with the C-terminal part of CARD8 (Caspase recruitment domain-containing protein 8, C-terminus), preventing activation of the CARD8 inflammasome. In response to pathogen-associated signals, this part is ubiquitinated by the N-end rule pathway and degraded by the proteasome, releasing the cleaved C-terminal part of the protein, which polymerizes and forms the CARD8 inflammasome. In terms of biological role, constitutes the active part of the CARD8 inflammasome. In absence of pathogens and other damage-associated signals, interacts with the N-terminal part of CARD8 (Caspase recruitment domain-containing protein 8, N-terminus), preventing activation of the CARD8 inflammasome. In response to pathogen-associated signals, the N-terminal part of CARD8 is degraded by the proteasome, releasing this form, which polymerizes to form the CARD8 inflammasome complex: the CARD8 inflammasome complex then directly recruits pro-caspase-1 (proCASP1) and promotes caspase-1 (CASP1) activation, leading to gasdermin-D (GSDMD) cleavage and subsequent pyroptosis. This chain is Caspase recruitment domain-containing protein 8, found in Homo sapiens (Human).